The following is a 162-amino-acid chain: Caveolin-2 (162 aa).

Over 1–86 the chain is Cytoplasmic; the sequence is MGLETEKADV…FEISKYVIYK (86 aa). Tyr-19 bears the Phosphotyrosine; by SRC mark. Phosphoserine occurs at positions 20 and 23. A Phosphotyrosine; by SRC modification is found at Tyr-27. Residues 87–107 constitute an intramembrane region (helical); it reads FLTVFLAIPLAFVAGILFATL. Over 108–162 the chain is Cytoplasmic; the sequence is SCLHIWIIMPFVKTCLMLLPSVQTIWKSVTDVVIAPLCTSAGRSFSSVSLQLSHD.

The protein belongs to the caveolin family. As to quaternary structure, monomer or homodimer. Interacts with CAV1; the interaction forms a stable heterooligomeric complex that is required for targeting to lipid rafts and for caveolae formation. Tyrosine phosphorylated forms do not form heterooligomers with the Tyr-19-phosphorylated form existing as a monomer or dimer, and the Tyr-27-form as a monomer only. Interacts (tyrosine phosphorylated form) with the SH2 domain-containing proteins, RASA1, NCK1 and SRC. Interacts (tyrosine phosphorylated form) with INSR, the interaction (Tyr-27-phosphorylated form) is increased on insulin stimulation. Interacts (Tyr-19 phosphorylated form) with MAPK1 (phosphorylated form); the interaction, promoted by insulin, leads to nuclear location and MAPK1 activation. Interacts with STAT3; the interaction is increased on insulin-induced tyrosine phosphorylation leading to STAT activation. Phosphorylated on serine and tyrosine residues. CAV1 promotes phosphorylation on Ser-23 which then targets the complex to the plasma membrane, lipid rafts and caveolae. Phosphorylation on both Tyr-19 and Tyr-27 is required for insulin-induced 'Ser-727' phosphorylation of STAT3 and its activation. Phosphorylation on Tyr-19 is required for insulin-induced phosphorylation of MAPK1 and DNA binding of STAT3. Tyrosine phosphorylation is induced by both EGF and insulin.

The protein resides in the nucleus. Its subcellular location is the cytoplasm. It localises to the golgi apparatus membrane. It is found in the cell membrane. The protein localises to the membrane. The protein resides in the caveola. May act as a scaffolding protein within caveolar membranes. Interacts directly with G-protein alpha subunits and can functionally regulate their activity. Acts as an accessory protein in conjunction with CAV1 in targeting to lipid rafts and driving caveolae formation. Positive regulator of cellular mitogenesis of the MAPK signaling pathway. Required for the insulin-stimulated nuclear translocation and activation of MAPK1 and STAT3, and the subsequent regulation of cell cycle progression. The chain is Caveolin-2 (CAV2) from Equus caballus (Horse).